A 207-amino-acid polypeptide reads, in one-letter code: Ras-related protein Rab-8A (207 aa).

GTP-binding residues include Ser17, Gly18, Val19, Gly20, Lys21, Thr22, Cys23, Ser35, Ser39, and Thr40. Position 22 (Thr22) interacts with Mg(2+). 2 consecutive short sequence motifs (switch) follow at residues 31–45 (DAFNSTFISTIGIDF) and 63–80 (DTAGQERFRTITTAYYRG). Mg(2+)-binding residues include Thr40 and Asp63. Gly66 is a binding site for GTP. A Phosphothreonine; by LRRK2 modification is found at Thr72. GTP-binding residues include Asn121, Lys122, Asp124, Ala152, and Lys153. Ser181 and Ser185 each carry phosphoserine. Cys204 bears the Cysteine methyl ester mark. Residue Cys204 is the site of S-geranylgeranyl cysteine attachment. Positions 205 to 207 (SLL) are cleaved as a propeptide — removed in mature form.

It belongs to the small GTPase superfamily. Rab family. Interacts (GTP-bound form) with MICALL1; regulates RAB8A association with recycling endosomes. Interacts with MICALL2; competes with RAB13 and is involved in E-cadherin endocytic recycling. Interacts (GTP-bound form) with MICAL1, MICALCL, MICAL3 and EHBP1L1; two molecules of RAB8A can bind to one molecule of the effector protein; ternary complexes of RAB8A, RAB13 and either MICAL1 or EHBP1L1 are possible. Interacts (GTP-bound form) with EHBP1. Interacts with EHD1. Interacts with MAP4K2 and SYTL4. Interacts with SGSM1 and SGSM3. Interacts with RABIF, RIMS2, RPH3A and RPH3A. Interacts with OPTN. Interacts with MYO5B. Interacts with CIMAP3. Interacts with BIRC6/bruce. Interacts with OCRL. Interacts with AHI1. Interacts with DCDC1. Interacts with LRRK2; interaction facilitates phosphorylation of Thr-72. Interacts with RAB31P, GDI1, GDI2, CHM, CHML, RABGGTA, RABGGTB, TBC1D15 and INPP5B; these interactions are dependent on Thr-72 not being phosphorylated. Interacts with RILPL1 and RILPL2; these interactions are dependent on the phosphorylation of Thr-72 by LRRK2. Interacts with DZIP1; prevents inhibition by the GDP-dissociation inhibitor GDI2. Interacts with RAB3IP/Rabin8, RAB3IP functions as guanine exchange factor (GEF) towards RAB8A. Interacts (in GDP-bound form) with RPGR, RPGR functions as GEF towards RAB8A. Mg(2+) is required as a cofactor. In terms of processing, phosphorylation of Thr-72 in the switch II region by LRRK2 prevents the association of RAB regulatory proteins, including CHM, CHML and RAB GDP dissociation inhibitors GDI1 and GDI2. Phosphorylation by LRRK2 is required for localization to stressed lysosomes.

The protein localises to the cell membrane. It is found in the golgi apparatus. It localises to the endosome membrane. The protein resides in the recycling endosome membrane. Its subcellular location is the cell projection. The protein localises to the cilium. It is found in the cytoplasmic vesicle. It localises to the phagosome membrane. The protein resides in the cytoplasm. Its subcellular location is the cytoskeleton. The protein localises to the microtubule organizing center. It is found in the centrosome. It localises to the centriole. The protein resides in the cilium basal body. Its subcellular location is the midbody. The protein localises to the lysosome. It carries out the reaction GTP + H2O = GDP + phosphate + H(+). Regulated by guanine nucleotide exchange factors (GEFs) such as RAB3IP/Rabin8 and RPGR which promote the exchange of bound GDP for free GTP, GTPase activating proteins (GAPs) which increase the GTP hydrolysis activity, and GDP dissociation inhibitors (GDIs) which inhibit the dissociation of the nucleotide from the GTPase. Activated in response to insulin. Its function is as follows. The small GTPases Rab are key regulators of intracellular membrane trafficking, from the formation of transport vesicles to their fusion with membranes. Rabs cycle between an inactive GDP-bound form and an active GTP-bound form that is able to recruit to membranes different sets of downstream effectors directly responsible for vesicle formation, movement, tethering and fusion. RAB8A is involved in polarized vesicular trafficking and neurotransmitter release. Together with RAB11A, RAB3IP, the exocyst complex, PARD3, PRKCI, ANXA2, CDC42 and DNMBP promotes transcytosis of PODXL to the apical membrane initiation sites (AMIS), apical surface formation and lumenogenesis. Regulates the compacted morphology of the Golgi. Together with MYO5B and RAB11A participates in epithelial cell polarization. Also involved in membrane trafficking to the cilium and ciliogenesis. Together with MICALL2, may also regulate adherens junction assembly. May play a role in insulin-induced transport to the plasma membrane of the glucose transporter GLUT4 and therefore play a role in glucose homeostasis. Involved in autophagy. Participates in the export of a subset of neosynthesized proteins through a Rab8-Rab10-Rab11-dependent endososomal export route. Targeted to and stabilized on stressed lysosomes through LRRK2 phosphorylation. Suppresses stress-induced lysosomal enlargement through EHBP1 and EHNP1L1 effector proteins. In Mus musculus (Mouse), this protein is Ras-related protein Rab-8A.